The following is a 262-amino-acid chain: tRNA 4-demethylwyosine(37)-methyltransferase Taw21 (262 aa).

S-adenosyl-L-methionine is bound by residues histidine 108, phenylalanine 125, 148–149 (DL), and 175–176 (DA).

The protein belongs to the class I-like SAM-binding methyltransferase superfamily. TRM5/TYW2 family.

The protein localises to the cytoplasm. It carries out the reaction 4-demethylwyosine(37) in tRNA(Phe) + S-adenosyl-L-methionine = isowyosine(37) in tRNA(Phe) + S-adenosyl-L-homocysteine + H(+). Its function is as follows. Catalyzes the C7-methylation of 4-demethylwyosine (imG-14) at position 37 in tRNA(Phe). This is tRNA 4-demethylwyosine(37)-methyltransferase Taw21 from Saccharolobus solfataricus (strain ATCC 35092 / DSM 1617 / JCM 11322 / P2) (Sulfolobus solfataricus).